The primary structure comprises 1070 residues: Envelopment polyprotein (1070 aa).

Positions M1 to C17 are cleaved as a signal peptide. At E18 to K457 the chain is on the lumenal side. 8 disulfides stabilise this stretch: C22/C55, C152/C165, C211/C221, C267/C309, C296/C301, C353/C356, C360/C429, and C380/C385. N-linked (GlcNAc...) asparagine; by host glycosylation occurs at N269. Residues W458 to I478 traverse the membrane as a helical segment. The Cytoplasmic portion of the chain corresponds to M479–S536. The tract at residues R480–L522 is golgi retention signal. The segment at K541–C560 is internal signal sequence for glycoprotein C. Positions V550–C560 are excised as a propeptide. Residues V550–S1023 lie on the Lumenal side of the membrane. Intrachain disulfides connect C561–C602, C574–C584, C642–C831, C648–C696, C654–C703, C659–C685, C689–C694, C799–C813, C896–C966, and C906–C909. The segment at C648 to C654 is fusion loop. A fusion loop region spans residues G690–P701. A helical membrane pass occupies residues L1024–I1044. The Cytoplasmic portion of the chain corresponds to L1045 to S1070.

This sequence belongs to the phlebovirus envelope glycoprotein family. In terms of assembly, heterodimer with glycoprotein C. As to quaternary structure, heterodimer with glycoprotein N. Homotrimer (postfusion). In terms of processing, specific enzymatic cleavages in vivo yield mature proteins Glycoprotein C, and Glycoprotein N. Glycosylated. Post-translationally, palmitoylated.

It localises to the virion membrane. The protein localises to the host Golgi apparatus membrane. The protein resides in the host endoplasmic reticulum membrane. Functionally, structural component of the virion that interacts with glycoprotein C. It shields the hydrophobic fusion loops of the glycoprotein C, preventing premature fusion. The glycoprotein protrusions are arranged on an icosahedral lattice, with T=12 triangulation. They are able to attach the virion to the host cell receptor CD209/DC-SIGN and to promote fusion of membranes with the late endosome after endocytosis of the virion. Plays a role in the packaging of ribonucleoproteins during virus assembly. Its function is as follows. Structural component of the virion that interacts with glycoprotein N. Acts as a class II fusion protein that is activated upon acidification and subsequent repositioning of the glycoprotein N. The glycoprotein protrusions are arranged on an icosahedral lattice, with T=12 triangulation. They are able to attach the virion to the host cell receptor CD209/DC-SIGN and to promote fusion of membranes with the late endosome after endocytosis of the virion. This chain is Envelopment polyprotein (GP), found in Amblyomma variegatum (Tropical bont tick).